The sequence spans 102 residues: Urease subunit beta (102 aa).

It belongs to the urease beta subunit family. Heterotrimer of UreA (gamma), UreB (beta) and UreC (alpha) subunits. Three heterotrimers associate to form the active enzyme.

It is found in the cytoplasm. The catalysed reaction is urea + 2 H2O + H(+) = hydrogencarbonate + 2 NH4(+). The protein operates within nitrogen metabolism; urea degradation; CO(2) and NH(3) from urea (urease route): step 1/1. This Alteromonas mediterranea (strain DSM 17117 / CIP 110805 / LMG 28347 / Deep ecotype) protein is Urease subunit beta.